Consider the following 417-residue polypeptide: Carbohydrate sulfotransferase 8 (417 aa).

Over 1–10 (MTPRLGTMRL) the chain is Cytoplasmic. The chain crosses the membrane as a helical; Signal-anchor for type II membrane protein span at residues 11–31 (ACMFSSILLFGAAGLLLFISL). The Lumenal portion of the chain corresponds to 32–417 (QDPIELSPQQ…NYSKPFSDLY (386 aa)). Residues 47 to 101 (FSIRPQQPQHDSHLRISTEKGTRDSPSGSPRGLQLQAPDQPRPHPKAAGSPLRLR) are disordered. The segment covering 56–69 (HDSHLRISTEKGTR) has biased composition (basic and acidic residues). Residues Asn121 and Asn122 are each glycosylated (N-linked (GlcNAc...) asparagine). 3'-phosphoadenylyl sulfate-binding positions include 191–197 (PKAGCSN) and 251–259 (REPFERLVS). Asn287, Asn360, and Asn408 each carry an N-linked (GlcNAc...) asparagine glycan.

This sequence belongs to the sulfotransferase 2 family. As to expression, strongly expressed in brain. Weakly expressed in lung and kidney. Weakly expressed in pituitary.

It is found in the golgi apparatus membrane. In terms of biological role, catalyzes the transfer of sulfate to position 4 of non-reducing N-acetylgalactosamine (GalNAc) residues in both N-glycans and O-glycans. Required for biosynthesis of glycoprotein hormones lutropin and thyrotropin, by mediating sulfation of their carbohydrate structures. Only active against terminal GalNAcbeta1,GalNAcbeta. Not active toward chondroitin. The chain is Carbohydrate sulfotransferase 8 (Chst8) from Mus musculus (Mouse).